Consider the following 236-residue polypeptide: Small ribosomal subunit protein uS2c (236 aa).

The protein belongs to the universal ribosomal protein uS2 family.

Its subcellular location is the plastid. The protein resides in the chloroplast. This chain is Small ribosomal subunit protein uS2c (rps2), found in Morus indica (Mulberry).